Reading from the N-terminus, the 113-residue chain is Large ribosomal subunit protein bL20c (113 aa).

It belongs to the bacterial ribosomal protein bL20 family.

Its subcellular location is the plastid. The protein resides in the chloroplast. Binds directly to 23S ribosomal RNA and is necessary for the in vitro assembly process of the 50S ribosomal subunit. It is not involved in the protein synthesizing functions of that subunit. This Staurastrum punctulatum (Green alga) protein is Large ribosomal subunit protein bL20c.